We begin with the raw amino-acid sequence, 413 residues long: Argininosuccinate synthase (413 aa).

ATP is bound by residues 12 to 20 and Ala39; that span reads AYSGGLDTS. L-citrulline is bound by residues Tyr92 and Ser97. Residue Gly122 coordinates ATP. 3 residues coordinate L-aspartate: Thr124, Asn128, and Asp129. Asn128 lines the L-citrulline pocket. Positions 132, 189, 198, 274, and 286 each coordinate L-citrulline.

It belongs to the argininosuccinate synthase family. Type 1 subfamily. Homotetramer.

It is found in the cytoplasm. It carries out the reaction L-citrulline + L-aspartate + ATP = 2-(N(omega)-L-arginino)succinate + AMP + diphosphate + H(+). The protein operates within amino-acid biosynthesis; L-arginine biosynthesis; L-arginine from L-ornithine and carbamoyl phosphate: step 2/3. The protein is Argininosuccinate synthase of Aliarcobacter butzleri (strain RM4018) (Arcobacter butzleri).